The chain runs to 539 residues: T-complex protein 1 subunit zeta (539 aa).

The protein belongs to the TCP-1 chaperonin family. In terms of assembly, heterooligomeric complex of about 850 to 900 kDa that forms two stacked rings, 12 to 16 nm in diameter.

Its subcellular location is the cytoplasm. Functionally, molecular chaperone; assists the folding of proteins upon ATP hydrolysis. Known to play a role, in vitro, in the folding of actin and tubulin. The polypeptide is T-complex protein 1 subunit zeta (cct6) (Dictyostelium discoideum (Social amoeba)).